The following is an 855-amino-acid chain: uncharacterized protein (855 aa).

A run of 10 helical transmembrane segments spans residues P24–I44, A256–I276, I318–V338, L361–I381, L404–W424, L430–P450, I487–G507, I725–L745, M780–V800, and F821–W841.

It belongs to the ABC-4 integral membrane protein family. As to quaternary structure, the complex is probably composed of two ATP-binding proteins (Rv0986) and two transmembrane proteins (Rv0987).

The protein localises to the cell membrane. Its function is as follows. Probably part of an ABC transporter complex involved in host cell binding either through secretion of an adherence factor or through maintaining the architecture and integrity of the mycobacterial cell envelope. Could be required for host endothelial-cell invasion and/or intracellular survival. This is an uncharacterized protein from Mycobacterium tuberculosis (strain ATCC 25618 / H37Rv).